Here is a 148-residue protein sequence, read N- to C-terminus: [Ribosomal protein bS18]-alanine N-acetyltransferase (148 aa).

The N-acetyltransferase domain occupies 2 to 147 (NTISSLETTD…DAIIMALPIS (146 aa)). An acetyl-CoA-binding site is contributed by 69–71 (IAV). Glu103 acts as the Proton acceptor in catalysis. Asn108 contacts acetyl-CoA. Residue Tyr115 is the Proton donor of the active site.

The protein belongs to the acetyltransferase family. RimI subfamily.

Its subcellular location is the cytoplasm. It carries out the reaction N-terminal L-alanyl-[ribosomal protein bS18] + acetyl-CoA = N-terminal N(alpha)-acetyl-L-alanyl-[ribosomal protein bS18] + CoA + H(+). In terms of biological role, acetylates the N-terminal alanine of ribosomal protein bS18. This is [Ribosomal protein bS18]-alanine N-acetyltransferase from Escherichia coli O157:H7.